Here is a 135-residue protein sequence, read N- to C-terminus: Flagellar assembly factor FliW 1 (135 aa).

Belongs to the FliW family. In terms of assembly, interacts with translational regulator CsrA and flagellin(s).

Its subcellular location is the cytoplasm. Its function is as follows. Acts as an anti-CsrA protein, binds CsrA and prevents it from repressing translation of its target genes, one of which is flagellin. Binds to flagellin and participates in the assembly of the flagellum. The sequence is that of Flagellar assembly factor FliW 1 from Helicobacter pylori (strain ATCC 700392 / 26695) (Campylobacter pylori).